Consider the following 401-residue polypeptide: Probable tRNA sulfurtransferase (401 aa).

The THUMP domain occupies 60-165 (EPISEQLKGV…EQATYITFKD (106 aa)). ATP is bound by residues 183–184 (ML), 208–209 (HF), arginine 265, glycine 287, and glutamine 296.

It belongs to the ThiI family.

The protein localises to the cytoplasm. It carries out the reaction [ThiI sulfur-carrier protein]-S-sulfanyl-L-cysteine + a uridine in tRNA + 2 reduced [2Fe-2S]-[ferredoxin] + ATP + H(+) = [ThiI sulfur-carrier protein]-L-cysteine + a 4-thiouridine in tRNA + 2 oxidized [2Fe-2S]-[ferredoxin] + AMP + diphosphate. It catalyses the reaction [ThiS sulfur-carrier protein]-C-terminal Gly-Gly-AMP + S-sulfanyl-L-cysteinyl-[cysteine desulfurase] + AH2 = [ThiS sulfur-carrier protein]-C-terminal-Gly-aminoethanethioate + L-cysteinyl-[cysteine desulfurase] + A + AMP + 2 H(+). It functions in the pathway cofactor biosynthesis; thiamine diphosphate biosynthesis. Its function is as follows. Catalyzes the ATP-dependent transfer of a sulfur to tRNA to produce 4-thiouridine in position 8 of tRNAs, which functions as a near-UV photosensor. Also catalyzes the transfer of sulfur to the sulfur carrier protein ThiS, forming ThiS-thiocarboxylate. This is a step in the synthesis of thiazole, in the thiamine biosynthesis pathway. The sulfur is donated as persulfide by IscS. In Bacillus pumilus (strain SAFR-032), this protein is Probable tRNA sulfurtransferase.